The sequence spans 348 residues: Ribosomal RNA small subunit methyltransferase C (348 aa).

This sequence belongs to the methyltransferase superfamily. RsmC family. Monomer.

The protein localises to the cytoplasm. It catalyses the reaction guanosine(1207) in 16S rRNA + S-adenosyl-L-methionine = N(2)-methylguanosine(1207) in 16S rRNA + S-adenosyl-L-homocysteine + H(+). In terms of biological role, specifically methylates the guanine in position 1207 of 16S rRNA in the 30S particle. This chain is Ribosomal RNA small subunit methyltransferase C, found in Pectobacterium atrosepticum (strain SCRI 1043 / ATCC BAA-672) (Erwinia carotovora subsp. atroseptica).